The following is a 122-amino-acid chain: Large ribosomal subunit protein bL12 (122 aa).

This sequence belongs to the bacterial ribosomal protein bL12 family. Homodimer. Part of the ribosomal stalk of the 50S ribosomal subunit. Forms a multimeric L10(L12)X complex, where L10 forms an elongated spine to which 2 to 4 L12 dimers bind in a sequential fashion. Binds GTP-bound translation factors.

Its function is as follows. Forms part of the ribosomal stalk which helps the ribosome interact with GTP-bound translation factors. Is thus essential for accurate translation. This is Large ribosomal subunit protein bL12 from Histophilus somni (strain 129Pt) (Haemophilus somnus).